Reading from the N-terminus, the 358-residue chain is Biotin synthase (358 aa).

Residues Asn-55 to Ala-278 form the Radical SAM core domain. Residues Cys-70, Cys-74, and Cys-77 each coordinate [4Fe-4S] cluster. [2Fe-2S] cluster-binding residues include Cys-114, Cys-146, Cys-206, and Arg-276.

It belongs to the radical SAM superfamily. Biotin synthase family. Homodimer. [4Fe-4S] cluster is required as a cofactor. It depends on [2Fe-2S] cluster as a cofactor.

The catalysed reaction is (4R,5S)-dethiobiotin + (sulfur carrier)-SH + 2 reduced [2Fe-2S]-[ferredoxin] + 2 S-adenosyl-L-methionine = (sulfur carrier)-H + biotin + 2 5'-deoxyadenosine + 2 L-methionine + 2 oxidized [2Fe-2S]-[ferredoxin]. It functions in the pathway cofactor biosynthesis; biotin biosynthesis; biotin from 7,8-diaminononanoate: step 2/2. Its function is as follows. Catalyzes the conversion of dethiobiotin (DTB) to biotin by the insertion of a sulfur atom into dethiobiotin via a radical-based mechanism. This chain is Biotin synthase, found in Leptospira borgpetersenii serovar Hardjo-bovis (strain JB197).